The following is a 1171-amino-acid chain: MASGSRATPTRSPSSARPAAPRHQHHHSQSSGGSTSRAGGGGGGGGGGGGGAAAAESVSKAVAQYTLDARLHAVFEQSGASGRSFDYTQSLRASPTPSSEQQIAAYLSRIQRGGHIQPFGCTLAVADDSSFRLLAYSENTADLLDLSPHHSVPSLDSSAVPPPVSLGADARLLFAPSSAVLLERAFAAREISLLNPLWIHSRVSSKPFYAILHRIDVGVVIDLEPARTEDPALSIAGAVQSQKLAVRAISRLQALPGGDVKLLCDTVVEYVRELTGYDRVMVYRFHEDEHGEVVAESRRNNLEPYIGLHYPATDIPQASRFLFRQNRVRMIADCHAAPVRVIQDPALTQPLCLVGSTLRSPHGCHAQYMANMGSIASLVMAVIISSGGDDDHNISRGSIPSAMKLWGLVVCHHTSPRCIPFPLRYACEFLMQAFGLQLNMELQLAHQLSEKHILRTQTLLCDMLLRDSPTGIVTQSPSIMDLVKCDGAALYYHGKYYPLGVTPTEVQIKDIIEWLTMCHGDSTGLSTDSLADAGYPGAAALGDAVSGMAVAYITPSDYLFWFRSHTAKEIKWGGAKHHPEDKDDGQRMHPRSSFKAFLEVVKSRSLPWENAEMDAIHSLQLILRDSFRDSAEGTSNSKAIVNGQVQLGELELRGIDELSSVAREMVRLIETATVPIFAVDTDGCINGWNAKVAELTGLSVEEAMGKSLVNDLIFKESEETVNKLLSRALRGDEDKNVEIKLKTFGPEQSKGPIFVIVNACSSRDYTKNIVGVCFVGQDVTGQKVVMDKFINIQGDYKAIVHNPNPLIPPIFASDENTCCSEWNTAMEKLTGWSRGEVVGKLLVGEVFGNCCRLKGPDALTKFMIVLHNAIGGQDCEKFPFSFFDKNGKYVQALLTANTRSRMDGEAIGAFCFLQIASPELQQAFEIQRHHEKKCYARMKELAYIYQEIKNPLNGIRFTNSLLEMTDLKDDQRQFLETSTACEKQMSKIVKDASLQSIEDGSLVLEKGEFSLGSVMNAVVSQVMIQLRERDLQLIRDIPDEIKEASAYGDQYRIQQVLCDFLLSMVRFAPAENGWVEIQVRPNIKQNSDGTDTMLFLFRFACPGEGLPPEIVQDMFSNSRWTTQEGIGLSICRKILKLMGGEVQYIRESERSFFHIVLELPQPQQAASRGTS.

Positions 1–19 (MASGSRATPTRSPSSARPA) are enriched in low complexity. The segment at 1-53 (MASGSRATPTRSPSSARPAAPRHQHHHSQSSGGSTSRAGGGGGGGGGGGGGAA) is disordered. Gly residues predominate over residues 38–52 (AGGGGGGGGGGGGGA). Positions 259–442 (DVKLLCDTVV…AFGLQLNMEL (184 aa)) constitute a GAF domain. Phytochromobilin is bound at residue Cys364. 2 PAS domains span residues 661-732 (VARE…LRGD) and 795-866 (DYKA…MIVL). Positions 943–1161 (YIYQEIKNPL…FFHIVLELPQ (219 aa)) constitute a Histidine kinase domain.

Belongs to the phytochrome family. Homodimer. In terms of processing, contains one covalently linked phytochromobilin chromophore.

In terms of biological role, regulatory photoreceptor which exists in two forms that are reversibly interconvertible by light: the Pr form that absorbs maximally in the red region of the spectrum and the Pfr form that absorbs maximally in the far-red region. Photoconversion of Pr to Pfr induces an array of morphogenic responses, whereas reconversion of Pfr to Pr cancels the induction of those responses. Pfr controls the expression of a number of nuclear genes including those encoding the small subunit of ribulose-bisphosphate carboxylase, chlorophyll A/B binding protein, protochlorophyllide reductase, rRNA, etc. It also controls the expression of its own gene(s) in a negative feedback fashion. The polypeptide is Phytochrome B (PHYB) (Oryza sativa subsp. japonica (Rice)).